Consider the following 293-residue polypeptide: Short-chain dehydrogenase/reductase PhomF' (293 aa).

2 residues coordinate NADP(+): I31 and N102. S175 functions as the Proton donor in the catalytic mechanism. Y190, K194, and S225 together coordinate NADP(+). Y190 acts as the Proton acceptor in catalysis. K194 functions as the Lowers pKa of active site Tyr in the catalytic mechanism.

Belongs to the short-chain dehydrogenases/reductases (SDR) family.

In terms of biological role, short-chain dehydrogenase/reductase; part of the gene cluster that mediates the biosynthesis of the phomopsins, a group of hexapeptide mycotoxins which infects lupins and causes lupinosis disease in livestock. The role of phomF' within the phomopsins biosynthesis pathway has still to be determined. The pathway starts with the processing of the precursor phomA by several endopeptidases including kexin proteases as well as the cluster-specific S41 family peptidase phomP1 and the oligopeptidase phomG to produce 10 identical copies of the hexapeptide Tyr-Val-Ile-Pro-Ile-Asp. After being excised from the precursor peptide, the core peptides are cyclized and modified post-translationally by enzymes encoded within the gene cluster. The timing and order of proteolysis of the phomA precursor and PTMs are still unknown. Two tyrosinase-like enzymes, phomQ1 and phomQ2, catalyze the chlorination and hydroxylation of Tyr, respectively. PhomYb, is proposed to be involved in the construction of the macrocyclic structure. The other 4 ustYa family proteins may be involved in PTMs that generate the unique structure of phomopsin A. PhomYa is required for the hydroxylation of C-beta of Tyr. PhomYc, phomYd, and phomYe are responsible for the biosynthesis of 2,3-dehydroisoleucine (dIle), 2,3-dehydroaspartic acid (dAsp), and 3,4-dehydroproline (dPro), respectively. While dIle formation by phomYc is indispensable for the installation of dAsp by phomYd, the order of the other PTMs have not been elucidated yet. Most of the biosynthetic enzymes likely have broad substrate specificity, and thus, there might be a metabolic grid from a precursor to phomopsin A. The enzyme(s) responsible for the biosynthesis of 3,4-dehydrovaline (dVal) have also not been identified yet. Finally, phomM acts as an S-adenosylmethionine-dependent alpha-N-methyltransferase that catalyzes two successive N-methylation reactions, converting N-desmethyl-phomopsin A to phomopsin A and phomopsin A further to an N,N-dimethylated congener called phomopsin E. The polypeptide is Short-chain dehydrogenase/reductase PhomF' (Diaporthe leptostromiformis (Lupinosis disease fungus)).